A 98-amino-acid polypeptide reads, in one-letter code: NADH-ubiquinone oxidoreductase chain 4L (98 aa).

3 helical membrane-spanning segments follow: residues M1–M21, S29–L49, and I61–V81.

It belongs to the complex I subunit 4L family. As to quaternary structure, core subunit of respiratory chain NADH dehydrogenase (Complex I) which is composed of 45 different subunits.

The protein resides in the mitochondrion inner membrane. It carries out the reaction a ubiquinone + NADH + 5 H(+)(in) = a ubiquinol + NAD(+) + 4 H(+)(out). Core subunit of the mitochondrial membrane respiratory chain NADH dehydrogenase (Complex I) which catalyzes electron transfer from NADH through the respiratory chain, using ubiquinone as an electron acceptor. Part of the enzyme membrane arm which is embedded in the lipid bilayer and involved in proton translocation. This Pusa caspica (Caspian seal) protein is NADH-ubiquinone oxidoreductase chain 4L (MT-ND4L).